The following is a 510-amino-acid chain: Putative folylpolyglutamate synthase (510 aa).

98 to 101 (GKGS) contacts ATP. The Mg(2+) site is built by Ser-122, Glu-189, and His-217. ATP-binding residues include Arg-342 and Asp-357.

The protein belongs to the folylpolyglutamate synthase family. A monovalent cation serves as cofactor.

It is found in the mitochondrion inner membrane. The protein localises to the mitochondrion matrix. Its subcellular location is the cytoplasm. It carries out the reaction (6S)-5,6,7,8-tetrahydrofolyl-(gamma-L-Glu)(n) + L-glutamate + ATP = (6S)-5,6,7,8-tetrahydrofolyl-(gamma-L-Glu)(n+1) + ADP + phosphate + H(+). It participates in cofactor biosynthesis; tetrahydrofolylpolyglutamate biosynthesis. Functionally, catalyzes conversion of folates to polyglutamate derivatives allowing concentration of folate compounds in the cell and the intracellular retention of these cofactors, which are important substrates for most of the folate-dependent enzymes that are involved in one-carbon transfer reactions involved in purine, pyrimidine and amino acid synthesis. In Caenorhabditis elegans, this protein is Putative folylpolyglutamate synthase.